A 567-amino-acid polypeptide reads, in one-letter code: Oxygen-dependent choline dehydrogenase (567 aa).

Position 6–35 (6–35 (DYIIVGAGSAGNTLATRLTEDEGVTVLLLE)) interacts with FAD. The active-site Proton acceptor is the His475.

The protein belongs to the GMC oxidoreductase family. The cofactor is FAD.

It catalyses the reaction choline + A = betaine aldehyde + AH2. The enzyme catalyses betaine aldehyde + NAD(+) + H2O = glycine betaine + NADH + 2 H(+). The protein operates within amine and polyamine biosynthesis; betaine biosynthesis via choline pathway; betaine aldehyde from choline (cytochrome c reductase route): step 1/1. In terms of biological role, involved in the biosynthesis of the osmoprotectant glycine betaine. Catalyzes the oxidation of choline to betaine aldehyde and betaine aldehyde to glycine betaine at the same rate. In Pseudomonas fluorescens (strain Pf0-1), this protein is Oxygen-dependent choline dehydrogenase.